The chain runs to 317 residues: USG-1 protein homolog (317 aa).

This sequence belongs to the aspartate-semialdehyde dehydrogenase family.

This Haemophilus influenzae (strain ATCC 51907 / DSM 11121 / KW20 / Rd) protein is USG-1 protein homolog (usg).